A 131-amino-acid polypeptide reads, in one-letter code: Runt-related transcription factor 2 (131 aa).

The region spanning 1–10 (MRVGVPPQIP) is the Runt domain. Positions 1–75 (MRVGVPPQIP…SSTRGTGLPV (75 aa)) are disordered. Arginine 11 bears the Asymmetric dimethylarginine mark. 2 stretches are compositionally biased toward polar residues: residues 13 to 36 (SLNS…RQAQ) and 43 to 70 (YDQS…STRG).

As to quaternary structure, heterodimer of an alpha and a beta subunit. The alpha subunit binds DNA as a monomer and through the Runt domain. DNA-binding is increased by heterodimerization. Interacts with XRCC6 (Ku70) and XRCC5 (Ku80). Interacts with CCNB1, KAT6A and KAT6B. Interacts with HIVEP3. Interacts with IFI204. Interaction with SATB2; the interaction results in enhanced DNA binding and transactivation by these transcription factors. Binds to HIPK3. Interacts with FOXO1 (via a C-terminal region); the interaction inhibits RUNX2 transcriptional activity towards BGLAP. This interaction is prevented on insulin or IGF1 stimulation as FOXO1 is exported from the nucleus. Interacts with FOXP3. Interacts with TMEM119. Interacts with OLFM2. Interacts with IPO7; the interaction inhibits RUNX2 nuclear translocation in osteoblasts. In terms of processing, phosphorylated; probably by MAP kinases (MAPK). Phosphorylation by HIPK3 is required for the SPEN/MINT and FGF2 transactivation during osteoblastic differentiation.

Its subcellular location is the nucleus. The protein resides in the cytoplasm. Transcription factor involved in osteoblastic differentiation and skeletal morphogenesis. Essential for the maturation of osteoblasts and both intramembranous and endochondral ossification. CBF binds to the core site, 5'-PYGPYGGT-3', of a number of enhancers and promoters, including murine leukemia virus, polyomavirus enhancer, T-cell receptor enhancers, osteocalcin, osteopontin, bone sialoprotein, alpha 1(I) collagen, LCK, IL-3 and GM-CSF promoters. Inhibits KAT6B-dependent transcriptional activation. In osteoblasts, supports transcription activation: synergizes with SPEN/MINT to enhance FGFR2-mediated activation of the osteocalcin FGF-responsive element (OCFRE). This is Runt-related transcription factor 2 (RUNX2) from Equus caballus (Horse).